Consider the following 524-residue polypeptide: Cytochrome P450 1A1 (524 aa).

The tract at residues 33 to 44 is mitochondrial targeting signal; sequence TRTWVPKGLKSP. O-linked (GlcNAc) serine glycosylation occurs at serine 71. Substrate is bound at residue phenylalanine 228. Cysteine 461 is a heme binding site.

This sequence belongs to the cytochrome P450 family. In terms of assembly, both Cytochrome P450MT2A and Cytochrome P450MT2B interact with cytosolic chaperones HSP70 and HSP90; this interaction is required for initial targeting to mitochondria. P450MT2B interacts (via mitochondrial targeting signal) with TOMM40 (via N-terminus); this interaction is required for translocation across the mitochondrial outer membrane. Heme is required as a cofactor. Post-translationally, two forms; MT2A (long form) and MT2B (short form); are produced by NH2-terminal proteolytic cleavage. This cleavage activates a cryptic mitochondrial targeting signal. Liver.

The protein localises to the cytoplasm. The protein resides in the endoplasmic reticulum membrane. Its subcellular location is the mitochondrion inner membrane. It is found in the microsome membrane. The catalysed reaction is an organic molecule + reduced [NADPH--hemoprotein reductase] + O2 = an alcohol + oxidized [NADPH--hemoprotein reductase] + H2O + H(+). It carries out the reaction estrone + reduced [NADPH--hemoprotein reductase] + O2 = 2-hydroxyestrone + oxidized [NADPH--hemoprotein reductase] + H2O + H(+). The enzyme catalyses estrone + reduced [NADPH--hemoprotein reductase] + O2 = 4-hydroxyestrone + oxidized [NADPH--hemoprotein reductase] + H2O + H(+). It catalyses the reaction estrone + reduced [NADPH--hemoprotein reductase] + O2 = 6alpha-hydroxyestrone + oxidized [NADPH--hemoprotein reductase] + H2O + H(+). The catalysed reaction is estrone + reduced [NADPH--hemoprotein reductase] + O2 = 15alpha-hydroxyestrone + oxidized [NADPH--hemoprotein reductase] + H2O + H(+). It carries out the reaction estrone + reduced [NADPH--hemoprotein reductase] + O2 = 16alpha-hydroxyestrone + oxidized [NADPH--hemoprotein reductase] + H2O + H(+). The enzyme catalyses 17beta-estradiol + reduced [NADPH--hemoprotein reductase] + O2 = 2-hydroxy-17beta-estradiol + oxidized [NADPH--hemoprotein reductase] + H2O + H(+). It catalyses the reaction 17beta-estradiol + reduced [NADPH--hemoprotein reductase] + O2 = 4-hydroxy-17beta-estradiol + oxidized [NADPH--hemoprotein reductase] + H2O + H(+). The catalysed reaction is 17beta-estradiol + reduced [NADPH--hemoprotein reductase] + O2 = 6alpha-hydroxy-17beta-estradiol + oxidized [NADPH--hemoprotein reductase] + H2O + H(+). It carries out the reaction 17beta-estradiol + reduced [NADPH--hemoprotein reductase] + O2 = 7alpha-hydroxy-17beta-estradiol + oxidized [NADPH--hemoprotein reductase] + H2O + H(+). The enzyme catalyses 17beta-estradiol + reduced [NADPH--hemoprotein reductase] + O2 = 15alpha-hydroxy-17beta-estradiol + oxidized [NADPH--hemoprotein reductase] + H2O + H(+). It catalyses the reaction (5Z,8Z,11Z)-eicosatrienoate + reduced [NADPH--hemoprotein reductase] + O2 = 19-hydroxy-(5Z,8Z,11Z)-eicosatrienoate + oxidized [NADPH--hemoprotein reductase] + H2O + H(+). The catalysed reaction is (5Z,8Z,11Z,14Z)-eicosatetraenoate + reduced [NADPH--hemoprotein reductase] + O2 = 16-hydroxy-(5Z,8Z,11Z,14Z)-eicosatetraenoate + oxidized [NADPH--hemoprotein reductase] + H2O + H(+). It carries out the reaction (5Z,8Z,11Z,14Z)-eicosatetraenoate + reduced [NADPH--hemoprotein reductase] + O2 = 17-hydroxy-(5Z,8Z,11Z,14Z)-eicosatetraenoate + oxidized [NADPH--hemoprotein reductase] + H2O + H(+). The enzyme catalyses (5Z,8Z,11Z,14Z)-eicosatetraenoate + reduced [NADPH--hemoprotein reductase] + O2 = 18-hydroxy-(5Z,8Z,11Z,14Z)-eicosatetraenoate + oxidized [NADPH--hemoprotein reductase] + H2O + H(+). It catalyses the reaction (5Z,8Z,11Z,14Z)-eicosatetraenoate + reduced [NADPH--hemoprotein reductase] + O2 = 19-hydroxy-(5Z,8Z,11Z,14Z)-eicosatetraenoate + oxidized [NADPH--hemoprotein reductase] + H2O + H(+). The catalysed reaction is (5Z,8Z,11Z,14Z,17Z)-eicosapentaenoate + reduced [NADPH--hemoprotein reductase] + O2 = 19-hydroxy-(5Z,8Z,11Z,14Z,17Z)-eicosapentaenoate + oxidized [NADPH--hemoprotein reductase] + H2O + H(+). It carries out the reaction (5Z,8Z,11Z,14Z)-eicosatetraenoate + reduced [NADPH--hemoprotein reductase] + O2 = (8R,9S)-epoxy-(5Z,11Z,14Z)-eicosatrienoate + oxidized [NADPH--hemoprotein reductase] + H2O + H(+). The enzyme catalyses (5Z,8Z,11Z,14Z)-eicosatetraenoate + reduced [NADPH--hemoprotein reductase] + O2 = (11R,12S)-epoxy-(5Z,8Z,14Z)-eicosatrienoate + oxidized [NADPH--hemoprotein reductase] + H2O + H(+). It catalyses the reaction (5Z,8Z,11Z,14Z)-eicosatetraenoate + reduced [NADPH--hemoprotein reductase] + O2 = (11S,12R)-epoxy-(5Z,8Z,14Z)-eicosatrienoate + oxidized [NADPH--hemoprotein reductase] + H2O + H(+). The catalysed reaction is (5Z,8Z,11Z,14Z)-eicosatetraenoate + reduced [NADPH--hemoprotein reductase] + O2 = (14R,15S)-epoxy-(5Z,8Z,11Z)-eicosatrienoate + oxidized [NADPH--hemoprotein reductase] + H2O + H(+). It carries out the reaction (5Z,8Z,11Z,14Z,17Z)-eicosapentaenoate + reduced [NADPH--hemoprotein reductase] + O2 = (17R,18S)-epoxy-(5Z,8Z,11Z,14Z)-eicosatetraenoate + oxidized [NADPH--hemoprotein reductase] + H2O + H(+). The enzyme catalyses (4Z,7Z,10Z,13Z,16Z,19Z)-docosahexaenoate + reduced [NADPH--hemoprotein reductase] + O2 = (19S,20R)-epoxy-(4Z,7Z,10Z,13Z,16Z)-docosapentaenoate + oxidized [NADPH--hemoprotein reductase] + H2O + H(+). It catalyses the reaction (4Z,7Z,10Z,13Z,16Z,19Z)-docosahexaenoate + reduced [NADPH--hemoprotein reductase] + O2 = (19R,20S)-epoxy-(4Z,7Z,10Z,13Z,16Z)-docosapentaenoate + oxidized [NADPH--hemoprotein reductase] + H2O + H(+). The catalysed reaction is all-trans-retinol + reduced [NADPH--hemoprotein reductase] + O2 = all-trans-retinal + oxidized [NADPH--hemoprotein reductase] + 2 H2O + H(+). It carries out the reaction all-trans-retinal + reduced [NADPH--hemoprotein reductase] + O2 = all-trans-retinoate + oxidized [NADPH--hemoprotein reductase] + H2O + 2 H(+). The enzyme catalyses (13S)-hydroperoxy-(9Z,11E)-octadecadienoate = 13-oxo-(9Z,11E)-octadecadienoate + H2O. It catalyses the reaction (12S)-hydroperoxy-(5Z,8Z,10E,14Z)-eicosatetraenoate = 12-oxo-(5Z,8Z,10E,14Z)-eicosatetraenoate + H2O. The catalysed reaction is (15S)-hydroperoxy-(5Z,8Z,11Z,13E)-eicosatetraenoate = 15-oxo-(5Z,8Z,11Z,13E)-eicosatetraenoate + H2O. It carries out the reaction (5S)-hydroperoxy-(6E,8Z,11Z,14Z)-eicosatetraenoate = 5-oxo-(6E,8Z,11Z,14Z)-eicosatetraenoate + H2O. Its pathway is steroid hormone biosynthesis. The protein operates within lipid metabolism; fatty acid metabolism. It functions in the pathway cofactor metabolism; retinol metabolism. In terms of biological role, a cytochrome P450 monooxygenase involved in the metabolism of various endogenous substrates, including fatty acids, steroid hormones and vitamins. Mechanistically, uses molecular oxygen inserting one oxygen atom into a substrate, and reducing the second into a water molecule, with two electrons provided by NADPH via cytochrome P450 reductase (CPR; NADPH-ferrihemoprotein reductase). Catalyzes the hydroxylation of carbon-hydrogen bonds. Exhibits high catalytic activity for the formation of hydroxyestrogens from estrone (E1) and 17beta-estradiol (E2), namely 2-hydroxy E1 and E2, as well as D-ring hydroxylated E1 and E2 at the C15alpha and C16alpha positions. Displays different regioselectivities for polyunsaturated fatty acids (PUFA) hydroxylation. Catalyzes the epoxidation of double bonds of certain PUFA. Converts arachidonic acid toward epoxyeicosatrienoic acid (EET) regioisomers, 8,9-, 11,12-, and 14,15-EET, that function as lipid mediators in the vascular system. Displays an absolute stereoselectivity in the epoxidation of eicosapentaenoic acid (EPA) producing the 17(R),18(S) enantiomer. May play an important role in all-trans retinoic acid biosynthesis in extrahepatic tissues. Catalyzes two successive oxidative transformation of all-trans retinol to all-trans retinal and then to the active form all-trans retinoic acid. May also participate in eicosanoids metabolism by converting hydroperoxide species into oxo metabolites (lipoxygenase-like reaction, NADPH-independent). The chain is Cytochrome P450 1A1 from Rattus norvegicus (Rat).